Consider the following 316-residue polypeptide: Exonuclease DPD1, chloroplastic/mitochondrial (316 aa).

Residues 1–63 (MCISISQVSR…NVSTTTQGSR (63 aa)) constitute a chloroplast and mitochondrion transit peptide. The region spanning 112-282 (IVSDLETTGL…SDVLLLSKVF (171 aa)) is the Exonuclease domain. Mg(2+) contacts are provided by D115 and E117. The active-site Proton donor/acceptor is the H269. D274 provides a ligand contact to Mg(2+).

This sequence belongs to the exonuclease superfamily. TREX family. Requires Mg(2+) as cofactor. As to expression, highly expressed in mature pollen grains. Detected in flowers, senescing leaves and roots.

The protein localises to the plastid. It localises to the chloroplast. The protein resides in the mitochondrion. Its activity is regulated as follows. Inhibited by free nucleotide diphosphates (NDPs). Functionally, exonuclease required for organelle DNA degradation during pollen development. Plays non-essential roles in maternal inheritance. May be part of the DNA salvage machinery. In Arabidopsis thaliana (Mouse-ear cress), this protein is Exonuclease DPD1, chloroplastic/mitochondrial.